A 557-amino-acid polypeptide reads, in one-letter code: Potassium-transporting ATPase potassium-binding subunit (557 aa).

A run of 12 helical transmembrane segments spans residues 5 to 25, 63 to 83, 132 to 152, 170 to 190, 253 to 273, 283 to 303, 329 to 349, 356 to 376, 379 to 399, 416 to 436, 484 to 504, and 526 to 546; these read GFLL…PLGS, LCAI…MLLG, GLTV…FALI, LLRI…LFFI, FVQM…FGEV, LLWA…WAEV, VLVS…AVIA, ALGG…FGGV, GLYG…LMIG, LTAL…ALAM, LLAL…MAIA, and LFVG…FIPA.

This sequence belongs to the KdpA family. In terms of assembly, the system is composed of three essential subunits: KdpA, KdpB and KdpC.

It is found in the cell inner membrane. In terms of biological role, part of the high-affinity ATP-driven potassium transport (or Kdp) system, which catalyzes the hydrolysis of ATP coupled with the electrogenic transport of potassium into the cytoplasm. This subunit binds the periplasmic potassium ions and delivers the ions to the membrane domain of KdpB through an intramembrane tunnel. The polypeptide is Potassium-transporting ATPase potassium-binding subunit (Escherichia coli O81 (strain ED1a)).